The primary structure comprises 163 residues: Ureidoglycolate lyase (163 aa).

The protein belongs to the ureidoglycolate lyase family. In terms of assembly, homodimer. It depends on Ni(2+) as a cofactor.

The catalysed reaction is (S)-ureidoglycolate = urea + glyoxylate. It participates in nitrogen metabolism; (S)-allantoin degradation. Catalyzes the catabolism of the allantoin degradation intermediate (S)-ureidoglycolate, generating urea and glyoxylate. Involved in the utilization of allantoin as nitrogen source. The polypeptide is Ureidoglycolate lyase (Mesorhizobium japonicum (strain LMG 29417 / CECT 9101 / MAFF 303099) (Mesorhizobium loti (strain MAFF 303099))).